The chain runs to 290 residues: Bifunctional protein FolD (290 aa).

Residues 166-168 (GAS) and Ile232 each bind NADP(+).

Belongs to the tetrahydrofolate dehydrogenase/cyclohydrolase family. Homodimer.

It catalyses the reaction (6R)-5,10-methylene-5,6,7,8-tetrahydrofolate + NADP(+) = (6R)-5,10-methenyltetrahydrofolate + NADPH. The catalysed reaction is (6R)-5,10-methenyltetrahydrofolate + H2O = (6R)-10-formyltetrahydrofolate + H(+). Its pathway is one-carbon metabolism; tetrahydrofolate interconversion. Its function is as follows. Catalyzes the oxidation of 5,10-methylenetetrahydrofolate to 5,10-methenyltetrahydrofolate and then the hydrolysis of 5,10-methenyltetrahydrofolate to 10-formyltetrahydrofolate. The protein is Bifunctional protein FolD of Proteus mirabilis (strain HI4320).